A 417-amino-acid polypeptide reads, in one-letter code: NADH-quinone oxidoreductase subunit D (417 aa).

The protein belongs to the complex I 49 kDa subunit family. In terms of assembly, NDH-1 is composed of 14 different subunits. Subunits NuoB, C, D, E, F, and G constitute the peripheral sector of the complex.

Its subcellular location is the cell inner membrane. It carries out the reaction a quinone + NADH + 5 H(+)(in) = a quinol + NAD(+) + 4 H(+)(out). In terms of biological role, NDH-1 shuttles electrons from NADH, via FMN and iron-sulfur (Fe-S) centers, to quinones in the respiratory chain. The immediate electron acceptor for the enzyme in this species is believed to be ubiquinone. Couples the redox reaction to proton translocation (for every two electrons transferred, four hydrogen ions are translocated across the cytoplasmic membrane), and thus conserves the redox energy in a proton gradient. The polypeptide is NADH-quinone oxidoreductase subunit D (Burkholderia orbicola (strain MC0-3)).